The chain runs to 104 residues: Small ribosomal subunit protein bS18c (104 aa).

The segment at 84–104 is disordered; sequence DKQFERSESTPRTIGLRTRNK.

It belongs to the bacterial ribosomal protein bS18 family. Part of the 30S ribosomal subunit.

The protein localises to the plastid. The protein resides in the chloroplast. This is Small ribosomal subunit protein bS18c from Cucumis sativus (Cucumber).